Here is a 197-residue protein sequence, read N- to C-terminus: Xanthine phosphoribosyltransferase (197 aa).

Positions 20 and 27 each coordinate xanthine. A 5-phospho-alpha-D-ribose 1-diphosphate-binding site is contributed by 128–132; that stretch reads ANGQA. Lys-156 is a xanthine binding site.

Belongs to the purine/pyrimidine phosphoribosyltransferase family. Xpt subfamily. As to quaternary structure, homodimer.

The protein localises to the cytoplasm. It catalyses the reaction XMP + diphosphate = xanthine + 5-phospho-alpha-D-ribose 1-diphosphate. It functions in the pathway purine metabolism; XMP biosynthesis via salvage pathway; XMP from xanthine: step 1/1. Converts the preformed base xanthine, a product of nucleic acid breakdown, to xanthosine 5'-monophosphate (XMP), so it can be reused for RNA or DNA synthesis. The sequence is that of Xanthine phosphoribosyltransferase from Bacillus cytotoxicus (strain DSM 22905 / CIP 110041 / 391-98 / NVH 391-98).